The following is a 438-amino-acid chain: uncharacterized protein (438 aa).

H59 serves as a coordination point for Zn(2+). E62 serves as the catalytic Proton acceptor. Residues H63 and E139 each contribute to the Zn(2+) site.

This sequence belongs to the peptidase M16 family. Requires Zn(2+) as cofactor.

This is an uncharacterized protein from Mycobacterium tuberculosis (strain CDC 1551 / Oshkosh).